Reading from the N-terminus, the 274-residue chain is Hydroxyethylthiazole kinase (274 aa).

A substrate-binding site is contributed by M49. Residues R125 and T173 each contribute to the ATP site. A substrate-binding site is contributed by G200.

The protein belongs to the Thz kinase family. The cofactor is Mg(2+).

It carries out the reaction 5-(2-hydroxyethyl)-4-methylthiazole + ATP = 4-methyl-5-(2-phosphooxyethyl)-thiazole + ADP + H(+). It functions in the pathway cofactor biosynthesis; thiamine diphosphate biosynthesis; 4-methyl-5-(2-phosphoethyl)-thiazole from 5-(2-hydroxyethyl)-4-methylthiazole: step 1/1. Its function is as follows. Catalyzes the phosphorylation of the hydroxyl group of 4-methyl-5-beta-hydroxyethylthiazole (THZ). The protein is Hydroxyethylthiazole kinase of Desulfosudis oleivorans (strain DSM 6200 / JCM 39069 / Hxd3) (Desulfococcus oleovorans).